Reading from the N-terminus, the 447-residue chain is Gamma-glutamyl phosphate reductase (447 aa).

It belongs to the gamma-glutamyl phosphate reductase family.

The protein resides in the cytoplasm. The enzyme catalyses L-glutamate 5-semialdehyde + phosphate + NADP(+) = L-glutamyl 5-phosphate + NADPH + H(+). It participates in amino-acid biosynthesis; L-proline biosynthesis; L-glutamate 5-semialdehyde from L-glutamate: step 2/2. In terms of biological role, catalyzes the NADPH-dependent reduction of L-glutamate 5-phosphate into L-glutamate 5-semialdehyde and phosphate. The product spontaneously undergoes cyclization to form 1-pyrroline-5-carboxylate. The protein is Gamma-glutamyl phosphate reductase of Methanosarcina barkeri (strain Fusaro / DSM 804).